The following is a 216-amino-acid chain: MIF4G domain-containing protein A (216 aa).

Residues 2-199 enclose the MIF4G domain; it reads DSAWTALDME…LEILEFRASG (198 aa).

It belongs to the MIF4GD family. As to quaternary structure, interacts with eif4g1, eif4g2 and slbp; probably tethered by SLBP to the 3'-end of mRNAs ending with the histone stem-loop, it also interacts with eif4g1 which is bound to their 5'-end.

Its subcellular location is the cytoplasm. The protein localises to the nucleus. Functionally, functions in replication-dependent translation of histone mRNAs which differ from other eukaryotic mRNAs in that they do not end with a poly-A tail but a stem-loop. May participate in circularizing those mRNAs specifically enhancing their translation. The chain is MIF4G domain-containing protein A (mif4gda) from Danio rerio (Zebrafish).